A 319-amino-acid chain; its full sequence is Probable cytochrome c oxidase subunit 2 (319 aa).

Positions 1–33 (MSPNGSDRSPRRPMRRKLLQALTAGLVLATATG) are cleaved as a signal peptide. 2 helical membrane passes run 63-83 (WAAA…SVFF) and 101-121 (LPIE…LFYF). Residues His227, Cys262, Cys266, and His270 each contribute to the Cu cation site.

Belongs to the cytochrome c oxidase subunit 2 family. The cofactor is Cu cation. Heme is required as a cofactor.

Its subcellular location is the cell membrane. The catalysed reaction is 4 Fe(II)-[cytochrome c] + O2 + 8 H(+)(in) = 4 Fe(III)-[cytochrome c] + 2 H2O + 4 H(+)(out). Functionally, subunits I and II form the functional core of the enzyme complex. Electrons originating in cytochrome c are transferred via heme a and Cu(A) to the binuclear center formed by heme a3 and Cu(B). The polypeptide is Probable cytochrome c oxidase subunit 2 (ctaC) (Streptomyces coelicolor (strain ATCC BAA-471 / A3(2) / M145)).